The following is a 154-amino-acid chain: Myoglobin (154 aa).

Residues 2 to 148 (GLSDGEWQLV…FRNDMAAKYK (147 aa)) enclose the Globin domain. At Ser4 the chain carries Phosphoserine. His65 lines the nitrite pocket. Residue His65 participates in O2 binding. At Thr68 the chain carries Phosphothreonine. His94 contacts heme b.

The protein belongs to the globin family. In terms of assembly, monomeric.

The protein localises to the cytoplasm. It is found in the sarcoplasm. The enzyme catalyses Fe(III)-heme b-[protein] + nitric oxide + H2O = Fe(II)-heme b-[protein] + nitrite + 2 H(+). It carries out the reaction H2O2 + AH2 = A + 2 H2O. Monomeric heme protein which primary function is to store oxygen and facilitate its diffusion within muscle tissues. Reversibly binds oxygen through a pentacoordinated heme iron and enables its timely and efficient release as needed during periods of heightened demand. Depending on the oxidative conditions of tissues and cells, and in addition to its ability to bind oxygen, it also has a nitrite reductase activity whereby it regulates the production of bioactive nitric oxide. Under stress conditions, like hypoxia and anoxia, it also protects cells against reactive oxygen species thanks to its pseudoperoxidase activity. The protein is Myoglobin (MB) of Lagothrix lagotricha (Brown woolly monkey).